A 391-amino-acid polypeptide reads, in one-letter code: S-adenosylmethionine synthase 5 (391 aa).

Glutamate 9 is a Mg(2+) binding site. Histidine 15 is a binding site for ATP. Glutamate 43 serves as a coordination point for K(+). 2 residues coordinate L-methionine: glutamate 56 and glutamine 99. ATP contacts are provided by residues aspartate 167–lysine 169, serine 235–phenylalanine 238, aspartate 246, arginine 252–lysine 253, alanine 269, lysine 273, and lysine 277. Aspartate 246 is a binding site for L-methionine. Lysine 277 lines the L-methionine pocket.

Belongs to the AdoMet synthase family. In terms of assembly, homotetramer. Requires Mn(2+) as cofactor. It depends on Mg(2+) as a cofactor. Co(2+) serves as cofactor. The cofactor is K(+).

Its subcellular location is the cytoplasm. The enzyme catalyses L-methionine + ATP + H2O = S-adenosyl-L-methionine + phosphate + diphosphate. The protein operates within amino-acid biosynthesis; S-adenosyl-L-methionine biosynthesis; S-adenosyl-L-methionine from L-methionine: step 1/1. Its function is as follows. Catalyzes the formation of S-adenosylmethionine from methionine and ATP. The reaction comprises two steps that are both catalyzed by the same enzyme: formation of S-adenosylmethionine (AdoMet) and triphosphate, and subsequent hydrolysis of the triphosphate. The chain is S-adenosylmethionine synthase 5 (METK5) from Vitis vinifera (Grape).